We begin with the raw amino-acid sequence, 151 residues long: UPF0178 protein YaiI (151 aa).

This sequence belongs to the UPF0178 family.

The polypeptide is UPF0178 protein YaiI (Salmonella arizonae (strain ATCC BAA-731 / CDC346-86 / RSK2980)).